Reading from the N-terminus, the 265-residue chain is 3-methyl-2-oxobutanoate hydroxymethyltransferase (265 aa).

Positions 45 and 84 each coordinate Mg(2+). Residues 45-46 (DS), Asp84, and Lys112 each bind 3-methyl-2-oxobutanoate. Glu114 is a binding site for Mg(2+). Glu181 acts as the Proton acceptor in catalysis.

The protein belongs to the PanB family. In terms of assembly, homodecamer; pentamer of dimers. It depends on Mg(2+) as a cofactor.

It is found in the cytoplasm. The enzyme catalyses 3-methyl-2-oxobutanoate + (6R)-5,10-methylene-5,6,7,8-tetrahydrofolate + H2O = 2-dehydropantoate + (6S)-5,6,7,8-tetrahydrofolate. Its pathway is cofactor biosynthesis; (R)-pantothenate biosynthesis; (R)-pantoate from 3-methyl-2-oxobutanoate: step 1/2. Its function is as follows. Catalyzes the reversible reaction in which hydroxymethyl group from 5,10-methylenetetrahydrofolate is transferred onto alpha-ketoisovalerate to form ketopantoate. The polypeptide is 3-methyl-2-oxobutanoate hydroxymethyltransferase (Pseudoalteromonas atlantica (strain T6c / ATCC BAA-1087)).